Reading from the N-terminus, the 44-residue chain is Defensin ARD1 (44 aa).

Cystine bridges form between Cys-7/Cys-32, Cys-18/Cys-40, and Cys-22/Cys-42.

Its subcellular location is the secreted. Its function is as follows. Possesses potent anti-fungal activity. In Archaeoprepona demophon (One-spotted leafwing butterfly), this protein is Defensin ARD1.